Consider the following 222-residue polypeptide: Cysteine protease inhibitor 9 (222 aa).

The signal sequence occupies residues 1 to 26; the sequence is MKSINILSFLLLSSTLSLVAFARSFS. Residues 27–42 constitute a propeptide that is removed on maturation; it reads SENPIVLPSTCHDDDN. Positions 29–34 match the Vacuolar targeting signal motif; it reads NPIVLP. Intrachain disulfides connect Cys84–Cys136 and Cys185–Cys191.

The protein belongs to the protease inhibitor I3 (leguminous Kunitz-type inhibitor) family. In terms of tissue distribution, tuber.

It is found in the vacuole. Functionally, putative inhibitor of cysteine proteases. Does not inhibit papain. May protect the plant by inhibiting proteases of invading organisms. This chain is Cysteine protease inhibitor 9, found in Solanum tuberosum (Potato).